Consider the following 317-residue polypeptide: MGLQGPAKVAIIGTGYVGSSTAFALLFSPLVKEMVLVDVNHAKAEGEAMDLAHAATLIRPVEVYAGRPADCAGSRIVIFTAGANQQPGQTRLDLIHRNTAIVRQALPEILHYCPEALVLMVANPVDILTYVAWKISGLPENRVLGSGTVLDSARFRHLLSRHYRVDPRNIHAYVIGEHGDTEVPVWSLANVAGVDLEEFYLMDGMREEEAFRVEISHQVREAAYEIIERKGVTSYGVALALSRIIECILRNEHSVLTISSVIRDLYGIDGEVALSLPCLVGNEGREKVLAIPLVAREKAALKHSATTLQQLIAQLSL.

NAD(+)-binding positions include Val17, Asp38, Lys43, and 82 to 83; that span reads GA. Substrate-binding positions include Gln85, Arg91, and 123–126; that span reads NPVD. Residues 121–123 and Ser146 contribute to the NAD(+) site; that span reads VAN. 151-154 provides a ligand contact to substrate; it reads DSAR. Positions 156 and 171 each coordinate beta-D-fructose 1,6-bisphosphate. The active-site Proton acceptor is His178. Tyr224 is subject to Phosphotyrosine. Thr233 contributes to the substrate binding site.

Belongs to the LDH/MDH superfamily. LDH family. In terms of assembly, homotetramer.

It is found in the cytoplasm. It carries out the reaction (S)-lactate + NAD(+) = pyruvate + NADH + H(+). It participates in fermentation; pyruvate fermentation to lactate; (S)-lactate from pyruvate: step 1/1. With respect to regulation, allosterically activated by fructose 1,6-bisphosphate (FBP). In terms of biological role, catalyzes the conversion of lactate to pyruvate. The polypeptide is L-lactate dehydrogenase (Moorella thermoacetica (strain ATCC 39073 / JCM 9320)).